We begin with the raw amino-acid sequence, 610 residues long: tRNA uridine 5-carboxymethylaminomethyl modification enzyme MnmG (610 aa).

14-19 (GAGHAG) is an FAD binding site. Residue 274 to 288 (GPRYCPSIEDKIVKF) coordinates NAD(+).

Belongs to the MnmG family. As to quaternary structure, homodimer. Heterotetramer of two MnmE and two MnmG subunits. FAD is required as a cofactor.

It is found in the cytoplasm. Its function is as follows. NAD-binding protein involved in the addition of a carboxymethylaminomethyl (cmnm) group at the wobble position (U34) of certain tRNAs, forming tRNA-cmnm(5)s(2)U34. The chain is tRNA uridine 5-carboxymethylaminomethyl modification enzyme MnmG from Chlamydia muridarum (strain MoPn / Nigg).